Here is a 469-residue protein sequence, read N- to C-terminus: Calcium-binding mitochondrial carrier protein SCaMC-2-A (469 aa).

The Mitochondrial intermembrane segment spans residues 1–189 (MLCLCLYVPV…EHLTGMWWRH (189 aa)). EF-hand domains are found at residues 47 to 80 (TYRRWRKKSLKTEEKEHDGQLDFEEFVHYLQDHE), 78 to 113 (DHEKDLKLVFKSMDRKIAGQVNANDIVNSLRDLGVH), and 114 to 149 (ISLKQAEKVLKSMDKNGTMTIDWNEWKKYPTLQPAE). The Ca(2+) site is built by Asp-64, Gln-66, and Glu-71. 3 Solcar repeats span residues 184-270 (GMWW…IKRV), 278-363 (LGIS…LKNT), and 375-463 (PGVF…IKST). The chain crosses the membrane as a helical span at residues 190–207 (LVSGGGAGAVSRTCTAPL). The Mitochondrial matrix portion of the chain corresponds to 208–244 (DRLKVLMQVHGCQGKSMCLMSGLTQMIKEGGVRSLWR). A helical membrane pass occupies residues 245–264 (GNGINVIKIAPETALKFMAY). Residues 265–287 (EQIKRVMGSSQETLGISERFVAG) are Mitochondrial intermembrane-facing. The helical transmembrane segment at 288–301 (SLAGVIAQSTIYPM) threads the bilayer. Topologically, residues 302–337 (EVLKTRLALRKTGQYKGISDCAKHILKTEGMSAFYK) are mitochondrial matrix. The chain crosses the membrane as a helical span at residues 338-357 (GYVPNMLGIIPYAGIDLAVY). The Mitochondrial intermembrane segment spans residues 358-380 (ETLKNTWLQRYGTENADPGVFVL). The helical transmembrane segment at 381–398 (LACGTVSSTCGQLASYPL) threads the bilayer. At 399–437 (ALIRTRMQAQASVEGSSQVSMTGLFKQIMKTEGPTGLYR) the chain is on the mitochondrial matrix side. The helical transmembrane segment at 438–457 (GLTPNFLKVIPAVSISYVVY) threads the bilayer. Over 458–469 (EHIKSTLGVRSR) the chain is Mitochondrial intermembrane.

Belongs to the mitochondrial carrier (TC 2.A.29) family.

The protein localises to the mitochondrion inner membrane. In terms of biological role, calcium-dependent mitochondrial solute carrier. In Danio rerio (Zebrafish), this protein is Calcium-binding mitochondrial carrier protein SCaMC-2-A (slc25a25a).